The following is a 342-amino-acid chain: Holliday junction branch migration complex subunit RuvB (342 aa).

The large ATPase domain (RuvB-L) stretch occupies residues 1–179 (MTSILSPEKS…FGIPMRLNFY (179 aa)). Residues Leu18, Arg19, Gly60, Lys63, Thr64, Thr65, 126 to 128 (EDF), Arg169, Tyr179, and Arg216 contribute to the ATP site. Thr64 contributes to the Mg(2+) binding site. The segment at 180–250 (NTEELKKVLN…IANFGLNRLE (71 aa)) is small ATPAse domain (RuvB-S). The interval 253–342 (IIGLDSNDYR…HQFNIFNDNE (90 aa)) is head domain (RuvB-H). DNA-binding residues include Arg289, Arg308, and Arg313.

The protein belongs to the RuvB family. Homohexamer. Forms an RuvA(8)-RuvB(12)-Holliday junction (HJ) complex. HJ DNA is sandwiched between 2 RuvA tetramers; dsDNA enters through RuvA and exits via RuvB. An RuvB hexamer assembles on each DNA strand where it exits the tetramer. Each RuvB hexamer is contacted by two RuvA subunits (via domain III) on 2 adjacent RuvB subunits; this complex drives branch migration. In the full resolvosome a probable DNA-RuvA(4)-RuvB(12)-RuvC(2) complex forms which resolves the HJ.

It is found in the cytoplasm. It carries out the reaction ATP + H2O = ADP + phosphate + H(+). Its function is as follows. The RuvA-RuvB-RuvC complex processes Holliday junction (HJ) DNA during genetic recombination and DNA repair, while the RuvA-RuvB complex plays an important role in the rescue of blocked DNA replication forks via replication fork reversal (RFR). RuvA specifically binds to HJ cruciform DNA, conferring on it an open structure. The RuvB hexamer acts as an ATP-dependent pump, pulling dsDNA into and through the RuvAB complex. RuvB forms 2 homohexamers on either side of HJ DNA bound by 1 or 2 RuvA tetramers; 4 subunits per hexamer contact DNA at a time. Coordinated motions by a converter formed by DNA-disengaged RuvB subunits stimulates ATP hydrolysis and nucleotide exchange. Immobilization of the converter enables RuvB to convert the ATP-contained energy into a lever motion, pulling 2 nucleotides of DNA out of the RuvA tetramer per ATP hydrolyzed, thus driving DNA branch migration. The RuvB motors rotate together with the DNA substrate, which together with the progressing nucleotide cycle form the mechanistic basis for DNA recombination by continuous HJ branch migration. Branch migration allows RuvC to scan DNA until it finds its consensus sequence, where it cleaves and resolves cruciform DNA. In Rickettsia bellii (strain RML369-C), this protein is Holliday junction branch migration complex subunit RuvB.